Reading from the N-terminus, the 569-residue chain is Protein germ cell-less (569 aa).

The interval 17–43 (SNRRKRKRSTDSSLGKDDPAQLDTTQP) is disordered. Residues 66–136 (SDVAVMALDK…MYSDEIEIES (71 aa)) enclose the BTB domain. A disordered region spans residues 517-553 (GANSDRPLSPSSADDSAVFIGDSEPSTPSSPAPRPRI).

It is found in the cytoplasm. Required for the specification of pole cells and germ cell formation. Mothers with reduced glc function give rise to sterile adult progeny that lack germ cells. The protein is Protein germ cell-less (gcl) of Drosophila melanogaster (Fruit fly).